Reading from the N-terminus, the 658-residue chain is Protein teflon (658 aa).

A C2H2-type 1 zinc finger spans residues Leu33–His56. Residues Asp80 to Asn131 form a disordered region. Positions Ala89 to Ser104 are enriched in polar residues. C2H2-type zinc fingers lie at residues Tyr608–His630 and Phe634–His657.

This sequence belongs to the Teflon family.

It is found in the nucleus. The protein localises to the chromosome. Specifically required in males for proper segregation of autosomal bivalents at meiosis I. Expression is required in the male germ line prior to spermatocyte stage S4. May have a role as a bridging molecule maintaining adhesion to hold autosome bivalents together via heterochromatic connections. This Drosophila simulans (Fruit fly) protein is Protein teflon.